A 111-amino-acid chain; its full sequence is Ribonuclease P protein component (111 aa).

Belongs to the RnpA family. In terms of assembly, consists of a catalytic RNA component (M1 or rnpB) and a protein subunit.

The enzyme catalyses Endonucleolytic cleavage of RNA, removing 5'-extranucleotides from tRNA precursor.. Its function is as follows. RNaseP catalyzes the removal of the 5'-leader sequence from pre-tRNA to produce the mature 5'-terminus. It can also cleave other RNA substrates such as 4.5S RNA. The protein component plays an auxiliary but essential role in vivo by binding to the 5'-leader sequence and broadening the substrate specificity of the ribozyme. The protein is Ribonuclease P protein component of Clostridium botulinum (strain 657 / Type Ba4).